A 330-amino-acid chain; its full sequence is Aspartate--ammonia ligase (330 aa).

The protein belongs to the class-II aminoacyl-tRNA synthetase family. AsnA subfamily.

The protein localises to the cytoplasm. The catalysed reaction is L-aspartate + NH4(+) + ATP = L-asparagine + AMP + diphosphate + H(+). It participates in amino-acid biosynthesis; L-asparagine biosynthesis; L-asparagine from L-aspartate (ammonia route): step 1/1. This chain is Aspartate--ammonia ligase, found in Shigella flexneri serotype 5b (strain 8401).